The following is a 278-amino-acid chain: Sulfur carrier protein FdhD (278 aa).

The Cysteine persulfide intermediate role is filled by Cys121. Phe260–Arg265 is a binding site for Mo-bis(molybdopterin guanine dinucleotide).

The protein belongs to the FdhD family.

It is found in the cytoplasm. In terms of biological role, required for formate dehydrogenase (FDH) activity. Acts as a sulfur carrier protein that transfers sulfur from IscS to the molybdenum cofactor prior to its insertion into FDH. The polypeptide is Sulfur carrier protein FdhD (Salmonella choleraesuis (strain SC-B67)).